The sequence spans 418 residues: L-glutamine:2-deoxy-scyllo-inosose aminotransferase (418 aa).

Lysine 192 carries the N6-(pyridoxal phosphate)lysine modification.

The protein belongs to the DegT/DnrJ/EryC1 family. L-glutamine:2-deoxy-scyllo-inosose/scyllo-inosose aminotransferase subfamily. It depends on pyridoxal 5'-phosphate as a cofactor.

The enzyme catalyses 2-deoxy-L-scyllo-inosose + L-glutamine = 2-deoxy-scyllo-inosamine + 2-oxoglutaramate. It carries out the reaction 3-amino-2,3-dideoxy-scyllo-inosose + L-glutamine = 2-deoxystreptamine + 2-oxoglutaramate. The protein operates within metabolic intermediate biosynthesis; 2-deoxystreptamine biosynthesis; 2-deoxystreptamine from D-glucose 6-phosphate: step 2/4. Its pathway is metabolic intermediate biosynthesis; 2-deoxystreptamine biosynthesis; 2-deoxystreptamine from D-glucose 6-phosphate: step 4/4. It participates in antibiotic biosynthesis; butirosin biosynthesis. Its function is as follows. Catalyzes the PLP-dependent transamination of 2-deoxy-scyllo-inosose (2-DOI) to form 2-deoxy-scyllo-inosamine (2-DOIA) using L-glutamine as the amino donor. Also catalyzes the transamination of 3-amino-2,3-dideoxy-scyllo-inosose (keto-2-DOIA) into 2-deoxystreptamine (2-DOS). The sequence is that of L-glutamine:2-deoxy-scyllo-inosose aminotransferase (btrR) from Niallia circulans (Bacillus circulans).